The sequence spans 234 residues: Carbohydrate deacetylase (234 aa).

2 residues coordinate Mg(2+): His60 and His123.

It belongs to the YdjC deacetylase family. Requires Mg(2+) as cofactor.

Functionally, probably catalyzes the deacetylation of acetylated carbohydrates an important step in the degradation of oligosaccharides. The protein is Carbohydrate deacetylase of Bacillus anthracis.